The primary structure comprises 834 residues: Periplasmic nitrate reductase (834 aa).

The tat-type signal signal peptide spans 1-29 (MNLTRREFAKANAAAIAAAAAGLPILVRA). A 4Fe-4S Mo/W bis-MGD-type domain is found at 41–97 (LDWNKAPCRFCGTGCSVMVATRDGQVVATHGDIKAEVNRGINCVKGYFLSKIMYGSD). Residues cysteine 48, cysteine 51, cysteine 55, and cysteine 83 each contribute to the [4Fe-4S] cluster site. Residues lysine 85, glutamine 152, asparagine 177, cysteine 181, 214 to 221 (WGSNMAEM), 245 to 249 (STFEH), 264 to 266 (QTD), methionine 375, glutamine 379, asparagine 485, 511 to 512 (SD), lysine 534, aspartate 561, and 721 to 730 (TGRVLEHWHT) contribute to the Mo-bis(molybdopterin guanine dinucleotide) site. A substrate-binding site is contributed by phenylalanine 797. 2 residues coordinate Mo-bis(molybdopterin guanine dinucleotide): asparagine 805 and lysine 822.

The protein belongs to the prokaryotic molybdopterin-containing oxidoreductase family. NasA/NapA/NarB subfamily. In terms of assembly, component of the periplasmic nitrate reductase NapAB complex composed of NapA and NapB. [4Fe-4S] cluster serves as cofactor. Mo-bis(molybdopterin guanine dinucleotide) is required as a cofactor. Predicted to be exported by the Tat system. The position of the signal peptide cleavage has not been experimentally proven.

It is found in the periplasm. It carries out the reaction 2 Fe(II)-[cytochrome] + nitrate + 2 H(+) = 2 Fe(III)-[cytochrome] + nitrite + H2O. Its function is as follows. Catalytic subunit of the periplasmic nitrate reductase complex NapAB. Receives electrons from NapB and catalyzes the reduction of nitrate to nitrite. The polypeptide is Periplasmic nitrate reductase (Pseudomonas paraeruginosa (strain DSM 24068 / PA7) (Pseudomonas aeruginosa (strain PA7))).